The sequence spans 126 residues: B3 domain-containing protein At5g54067 (126 aa).

The segment at residues 20–118 (SDIVGNVVLP…KFVVLNFQYS (99 aa)) is a DNA-binding region (TF-B3).

It localises to the nucleus. This is B3 domain-containing protein At5g54067 from Arabidopsis thaliana (Mouse-ear cress).